The chain runs to 227 residues: Enolase-phosphatase E1 (227 aa).

Belongs to the HAD-like hydrolase superfamily. MasA/MtnC family. As to quaternary structure, monomer. Requires Mg(2+) as cofactor.

The enzyme catalyses 5-methylsulfanyl-2,3-dioxopentyl phosphate + H2O = 1,2-dihydroxy-5-(methylsulfanyl)pent-1-en-3-one + phosphate. It functions in the pathway amino-acid biosynthesis; L-methionine biosynthesis via salvage pathway; L-methionine from S-methyl-5-thio-alpha-D-ribose 1-phosphate: step 3/6. The protein operates within amino-acid biosynthesis; L-methionine biosynthesis via salvage pathway; L-methionine from S-methyl-5-thio-alpha-D-ribose 1-phosphate: step 4/6. Bifunctional enzyme that catalyzes the enolization of 2,3-diketo-5-methylthiopentyl-1-phosphate (DK-MTP-1-P) into the intermediate 2-hydroxy-3-keto-5-methylthiopentenyl-1-phosphate (HK-MTPenyl-1-P), which is then dephosphorylated to form the acireductone 1,2-dihydroxy-3-keto-5-methylthiopentene (DHK-MTPene). The protein is Enolase-phosphatase E1 of Methylococcus capsulatus (strain ATCC 33009 / NCIMB 11132 / Bath).